The chain runs to 291 residues: Nucleotide-binding protein MSMEG_3079/MSMEI_3001 (291 aa).

14–21 (GLSGAGRG) provides a ligand contact to ATP. 65–68 (DVRS) lines the GTP pocket.

The protein belongs to the RapZ-like family.

Its function is as follows. Displays ATPase and GTPase activities. This chain is Nucleotide-binding protein MSMEG_3079/MSMEI_3001, found in Mycolicibacterium smegmatis (strain ATCC 700084 / mc(2)155) (Mycobacterium smegmatis).